A 310-amino-acid polypeptide reads, in one-letter code: tRNA dimethylallyltransferase (310 aa).

Glycine 12–threonine 19 contacts ATP. A substrate-binding site is contributed by threonine 14 to threonine 19. Positions aspartate 37–methionine 40 are interaction with substrate tRNA.

It belongs to the IPP transferase family. Monomer. It depends on Mg(2+) as a cofactor.

The enzyme catalyses adenosine(37) in tRNA + dimethylallyl diphosphate = N(6)-dimethylallyladenosine(37) in tRNA + diphosphate. Its function is as follows. Catalyzes the transfer of a dimethylallyl group onto the adenine at position 37 in tRNAs that read codons beginning with uridine, leading to the formation of N6-(dimethylallyl)adenosine (i(6)A). In Desulforudis audaxviator (strain MP104C), this protein is tRNA dimethylallyltransferase.